The primary structure comprises 312 residues: Deoxycytidylate deaminase (312 aa).

In terms of domain architecture, CMP/dCMP-type deaminase spans 162–291 (SWDSYFMKLA…RMDEESFKVL (130 aa)). His-233 contacts Zn(2+). Residue Glu-235 is the Proton donor of the active site. Cys-260 and Cys-263 together coordinate Zn(2+).

The protein belongs to the cytidine and deoxycytidylate deaminase family. Zn(2+) serves as cofactor.

The enzyme catalyses dCMP + H2O + H(+) = dUMP + NH4(+). Allosteric enzyme whose activity is greatly influenced by the end products of its metabolic pathway, dCTP and dTTP. Functionally, catalyzes the hydrolytic deamination of dCMP to yield dUMP, the nucleotide substrate for thymidylate synthetase. In Saccharomyces cerevisiae (strain ATCC 204508 / S288c) (Baker's yeast), this protein is Deoxycytidylate deaminase.